The primary structure comprises 542 residues: Cryptochrome-1 (542 aa).

One can recognise a Photolyase/cryptochrome alpha/beta domain in the interval 5 to 140 (GANVIWFRHG…DFVEKVSHTL (136 aa)). Residues Arg-237, Ser-265, Ser-267, Gln-311, His-378, 410 to 412 (DAD), Cys-416, and Asn-419 each bind FAD.

This sequence belongs to the DNA photolyase class-1 family. Interacts with tim and per; promoted by light conditions. Interaction with tim irreversibly commits tim to proteasomal degradation. Interacts with l(1)G0136/CG8198. Requires FAD as cofactor. In terms of tissue distribution, expressed at higher levels in the head than in body and it is more expressed in antennae than in legs, wings and mouth appendages. Prominent expression is seen in cells of the lateral brain, which are close to or coincident with the clock neurons. Abundance oscillates in a circadian manner.

It localises to the cytoplasm. It is found in the perinuclear region. The protein localises to the nucleus. Functionally, blue light-dependent regulator that is the input of the circadian feedback loop. Has no photolyase activity for cyclobutane pyrimidine dimers or 6-4 photoproducts. Regulation of expression by light suggests a role in photoreception for locomotor activity rhythms. Functions, together with per, as a transcriptional repressor required for the oscillation of peripheral circadian clocks and for the correct specification of clock cells. Genes directly activated by the transcription factors Clock (Clk) and cycle (cyc) are repressed by cry. Necessary for light-dependent magnetosensitivity, an intact circadian system is not required for the magnetoreception mechanism to operate. Required for both the naive and trained responses to magnetic field, consistent with the notion that cry is in the input pathway of magnetic sensing. This is Cryptochrome-1 from Drosophila melanogaster (Fruit fly).